We begin with the raw amino-acid sequence, 396 residues long: GPN-loop GTPase 1 (396 aa).

The span at 1 to 13 shows a compositional bias: low complexity; sequence MSETTATSTTTTK. Residues 1–30 are disordered; it reads MSETTATSTTTTKTTDKDNVNNNNNNENKE. 44-49 serves as a coordination point for GTP; sequence GSGKTT. A Gly-Pro-Asn (GPN)-loop; involved in dimer interface motif is present at residues 101-103; the sequence is GPN. 204-207 contributes to the GTP binding site; it reads NKID. Positions 284 to 387 form a coiled coil; the sequence is YKADLEKIKK…ERLEDQRAYE (104 aa). Residues 325–342 are compositionally biased toward basic and acidic residues; that stretch reads DFKKEKKRENQEKTKNIY. The segment at 325 to 396 is disordered; sequence DFKKEKKREN…ESLMSSIKKI (72 aa). The span at 343 to 380 shows a compositional bias: acidic residues; it reads DDEEDDYRDDRDMEDSGEYESYEDEQEEGDYENEEERL.

It belongs to the GPN-loop GTPase family. Heterodimer with gpn3. Binds to RNA polymerase II (RNAPII).

Its subcellular location is the cytoplasm. The protein localises to the nucleus. Small GTPase required for proper nuclear import of RNA polymerase II (RNAPII). May act at an RNAP assembly step prior to nuclear import. The sequence is that of GPN-loop GTPase 1 (gpn1) from Dictyostelium discoideum (Social amoeba).